The chain runs to 483 residues: V-type proton ATPase subunit B 2 (483 aa).

This sequence belongs to the ATPase alpha/beta chains family. As to quaternary structure, V-ATPase is a heteromultimeric enzyme composed of a peripheral catalytic V1 complex (main components: subunits A, B, C, D, E, and F) attached to an integral membrane V0 proton pore complex (main component: the proteolipid protein).

Non-catalytic subunit of the peripheral V1 complex of vacuolar ATPase. V-ATPase is responsible for acidifying a variety of intracellular compartments in eukaryotic cells. The protein is V-type proton ATPase subunit B 2 of Hordeum vulgare (Barley).